Here is an 89-residue protein sequence, read N- to C-terminus: Transcriptional regulator WhiB2 (89 aa).

Residues 1 to 15 (MVPEAPAPFEEPLPP) show a composition bias toward pro residues. The segment at 1–24 (MVPEAPAPFEEPLPPEATDQWQDR) is disordered. The 4Fe-4S Wbl-type domain occupies 26–83 (LCAQTDPEAFFPEKGGSTREAKKICMGCEVRHECLEYALAHDERFGIWGGLSERERRR). Cys27 contacts [4Fe-4S] cluster. Ser42 carries the post-translational modification Phosphoserine. Residues Cys50, Cys53, and Cys59 each contribute to the [4Fe-4S] cluster site.

This sequence belongs to the WhiB family. [4Fe-4S] cluster is required as a cofactor. Post-translationally, may be phosphorylated, possibly on Ser-42. In terms of processing, the cluster is degraded quickly in the presence of air. Upon cluster removal intramolecular disulfide bonds are formed. The Fe-S cluster can be nitrosylated by nitric oxide (NO).

Its subcellular location is the cytoplasm. In terms of biological role, acts as a transcriptional regulator. Probably redox-responsive. The apo- but not holo-form probably binds DNA. Its function is as follows. The apo-form functions as a chaperone, preventing aggregation or helping in correct refolding of a number of substrates; this activity does not require ATP or the ability to bind a Fe-S cluster. Chaperone activity is insensitive to the redox state of its cysteine residues. The apo-form has no protein disulfide reductase activity. The apo-form binds to its own promoter. In Mycobacterium tuberculosis (strain ATCC 25618 / H37Rv), this protein is Transcriptional regulator WhiB2 (whiB2).